Consider the following 68-residue polypeptide: Protein transport protein Sec61 subunit gamma (68 aa).

The Cytoplasmic portion of the chain corresponds to 1 to 32; it reads MDQIMQFVEPSRQFVKDSIRLVKRCTKPDRKE. The helical transmembrane segment at 33 to 61 threads the bilayer; the sequence is FQKIAMATAIGFAIMGFIGFFVKLIHIPI. The Extracellular segment spans residues 62–68; that stretch reads NNIIVGG.

This sequence belongs to the SecE/SEC61-gamma family. The SEC61 channel-forming translocon complex consists of channel-forming core components SEC61A1, SEC61B and SEC61G and different auxiliary components such as SEC62 and SEC63. The SEC61 channel associates with the multi-pass translocon (MPT) complex.

The protein resides in the endoplasmic reticulum membrane. Its function is as follows. Component of SEC61 channel-forming translocon complex that mediates transport of signal peptide-containing precursor polypeptides across the endoplasmic reticulum (ER). Forms a ribosome receptor and a gated pore in the ER membrane, both functions required for cotranslational translocation of nascent polypeptides. The SEC61 channel is also involved in ER membrane insertion of transmembrane proteins: it mediates membrane insertion of the first few transmembrane segments of proteins, while insertion of subsequent transmembrane regions of multi-pass membrane proteins is mediated by the multi-pass translocon (MPT) complex. This is Protein transport protein Sec61 subunit gamma (sec61g) from Gadus morhua (Atlantic cod).